Here is a 61-residue protein sequence, read N- to C-terminus: MRTTVAILLVLFALSAILAFYPDTTAEAKGCVKKVDCVCKGKGKKNHRSMCINGKCYCLKG.

The signal sequence occupies residues M1–A19. Intrachain disulfides connect C31/C51, C37/C56, and C39/C58.

Expressed by the venom gland.

It localises to the secreted. In Lychas mucronatus (Chinese swimming scorpion), this protein is Putative neurotoxin-D.